A 570-amino-acid polypeptide reads, in one-letter code: Glycine--tRNA ligase (570 aa).

Substrate is bound by residues arginine 99 and glutamate 165. ATP is bound by residues arginine 197 to glutamate 199, leucine 207 to phenylalanine 212, glutamate 324 to cysteine 325, and glycine 443 to arginine 446. Position 212–216 (phenylalanine 212–glutamate 216) interacts with substrate. Substrate is bound at residue glutamate 439–glycine 443.

This sequence belongs to the class-II aminoacyl-tRNA synthetase family.

Its subcellular location is the cytoplasm. It catalyses the reaction tRNA(Gly) + glycine + ATP = glycyl-tRNA(Gly) + AMP + diphosphate. Functionally, catalyzes the attachment of glycine to tRNA(Gly). In Thermococcus sibiricus (strain DSM 12597 / MM 739), this protein is Glycine--tRNA ligase.